The sequence spans 177 residues: ATP synthase subunit delta (177 aa).

Belongs to the ATPase delta chain family. F-type ATPases have 2 components, F(1) - the catalytic core - and F(0) - the membrane proton channel. F(1) has five subunits: alpha(3), beta(3), gamma(1), delta(1), epsilon(1). F(0) has three main subunits: a(1), b(2) and c(10-14). The alpha and beta chains form an alternating ring which encloses part of the gamma chain. F(1) is attached to F(0) by a central stalk formed by the gamma and epsilon chains, while a peripheral stalk is formed by the delta and b chains.

It is found in the cell membrane. Functionally, f(1)F(0) ATP synthase produces ATP from ADP in the presence of a proton or sodium gradient. F-type ATPases consist of two structural domains, F(1) containing the extramembraneous catalytic core and F(0) containing the membrane proton channel, linked together by a central stalk and a peripheral stalk. During catalysis, ATP synthesis in the catalytic domain of F(1) is coupled via a rotary mechanism of the central stalk subunits to proton translocation. This protein is part of the stalk that links CF(0) to CF(1). It either transmits conformational changes from CF(0) to CF(1) or is implicated in proton conduction. This chain is ATP synthase subunit delta, found in Exiguobacterium sp. (strain ATCC BAA-1283 / AT1b).